The sequence spans 212 residues: Thiamine-phosphate synthase (212 aa).

Residues 41-45 and aspartate 76 each bind 4-amino-2-methyl-5-(diphosphooxymethyl)pyrimidine; that span reads QYREK. Residues aspartate 77 and aspartate 96 each coordinate Mg(2+). Serine 114 is a binding site for 4-amino-2-methyl-5-(diphosphooxymethyl)pyrimidine. 141–143 provides a ligand contact to 2-[(2R,5Z)-2-carboxy-4-methylthiazol-5(2H)-ylidene]ethyl phosphate; the sequence is TTS. Lysine 144 provides a ligand contact to 4-amino-2-methyl-5-(diphosphooxymethyl)pyrimidine. 2-[(2R,5Z)-2-carboxy-4-methylthiazol-5(2H)-ylidene]ethyl phosphate is bound by residues glycine 172 and 192–193; that span reads IS.

Belongs to the thiamine-phosphate synthase family. Requires Mg(2+) as cofactor.

The catalysed reaction is 2-[(2R,5Z)-2-carboxy-4-methylthiazol-5(2H)-ylidene]ethyl phosphate + 4-amino-2-methyl-5-(diphosphooxymethyl)pyrimidine + 2 H(+) = thiamine phosphate + CO2 + diphosphate. It carries out the reaction 2-(2-carboxy-4-methylthiazol-5-yl)ethyl phosphate + 4-amino-2-methyl-5-(diphosphooxymethyl)pyrimidine + 2 H(+) = thiamine phosphate + CO2 + diphosphate. It catalyses the reaction 4-methyl-5-(2-phosphooxyethyl)-thiazole + 4-amino-2-methyl-5-(diphosphooxymethyl)pyrimidine + H(+) = thiamine phosphate + diphosphate. Its pathway is cofactor biosynthesis; thiamine diphosphate biosynthesis; thiamine phosphate from 4-amino-2-methyl-5-diphosphomethylpyrimidine and 4-methyl-5-(2-phosphoethyl)-thiazole: step 1/1. Its function is as follows. Condenses 4-methyl-5-(beta-hydroxyethyl)thiazole monophosphate (THZ-P) and 2-methyl-4-amino-5-hydroxymethyl pyrimidine pyrophosphate (HMP-PP) to form thiamine monophosphate (TMP). In Leuconostoc citreum (strain KM20), this protein is Thiamine-phosphate synthase.